Consider the following 86-residue polypeptide: Cell division topological specificity factor (86 aa).

The protein belongs to the MinE family.

Prevents the cell division inhibition by proteins MinC and MinD at internal division sites while permitting inhibition at polar sites. This ensures cell division at the proper site by restricting the formation of a division septum at the midpoint of the long axis of the cell. This is Cell division topological specificity factor from Albidiferax ferrireducens (strain ATCC BAA-621 / DSM 15236 / T118) (Rhodoferax ferrireducens).